The sequence spans 271 residues: Formamidopyrimidine-DNA glycosylase (271 aa).

Proline 2 acts as the Schiff-base intermediate with DNA in catalysis. Glutamate 3 serves as the catalytic Proton donor. Catalysis depends on lysine 58, which acts as the Proton donor; for beta-elimination activity. DNA is bound by residues histidine 92, arginine 111, and arginine 152. The FPG-type zinc-finger motif lies at 237 to 271 (YVYGKVQKPCRICNNIITLIRQNGRSTYFCNACQN). The Proton donor; for delta-elimination activity role is filled by arginine 261.

It belongs to the FPG family. Monomer. Zn(2+) is required as a cofactor.

The catalysed reaction is Hydrolysis of DNA containing ring-opened 7-methylguanine residues, releasing 2,6-diamino-4-hydroxy-5-(N-methyl)formamidopyrimidine.. It catalyses the reaction 2'-deoxyribonucleotide-(2'-deoxyribose 5'-phosphate)-2'-deoxyribonucleotide-DNA = a 3'-end 2'-deoxyribonucleotide-(2,3-dehydro-2,3-deoxyribose 5'-phosphate)-DNA + a 5'-end 5'-phospho-2'-deoxyribonucleoside-DNA + H(+). Functionally, involved in base excision repair of DNA damaged by oxidation or by mutagenic agents. Acts as a DNA glycosylase that recognizes and removes damaged bases. Has a preference for oxidized purines, such as 7,8-dihydro-8-oxoguanine (8-oxoG). Has AP (apurinic/apyrimidinic) lyase activity and introduces nicks in the DNA strand. Cleaves the DNA backbone by beta-delta elimination to generate a single-strand break at the site of the removed base with both 3'- and 5'-phosphates. This chain is Formamidopyrimidine-DNA glycosylase, found in Wolbachia pipientis subsp. Culex pipiens (strain wPip).